The chain runs to 582 residues: MLFGELAQYFEKIEKTTKRNEMMEILADLFKRVDKEEIEKIIYLLNGRVAPDYEKIEFGMSEKLVLRAMALALKVPIFDLEKVYKEVGDLGELIIKYSQNEGKDLTVVETFNTLFEIANLSGEGSVDAKVNRLAFLINSLTPQGGKYLVRIVLGKLRLGVGEPTVMDALSFAKVKDKSLRPFIERAFNITSDLGYVAKVFWEGGIEALKKIKVEVGKPIRMALAERVSKVEEIVKRLGKCAIEPKFDGFRCQIHKKENNVRIFSRNLEDNTHMFPDLVEAVLKQFSDKNVIIEGEAISYNPETGEFYPFQVTVQRKRKYNISEMVELYPLQLFAFDILYLNGEDITSLPYIRRRQKLEEAISEGEKIFVTKNIITNDPKEIQAFFEECITEGLEGIVAKRLDAPYQAGIRNFNWIKLKRSYQGHLADTVDCVILGYFKGRGHRAKFGIGALLVGVYDDERDLFKTVAKIGTGPTEEEWVRFREVLDEIKLESKPNNVESLIEPDVWVEPKYVVVIQADEITRSPVHTCGRELDGLGYALRFPRVIGFVREDKGPYDATTVKEILEMFRGQKKEKVEEDSDNL.

E243 lines the ATP pocket. The N6-AMP-lysine intermediate role is filled by K245. Residues R250, R265, E295, F335, R410, and K416 each contribute to the ATP site.

It belongs to the ATP-dependent DNA ligase family. Mg(2+) is required as a cofactor.

The enzyme catalyses ATP + (deoxyribonucleotide)n-3'-hydroxyl + 5'-phospho-(deoxyribonucleotide)m = (deoxyribonucleotide)n+m + AMP + diphosphate.. In terms of biological role, DNA ligase that seals nicks in double-stranded DNA during DNA replication, DNA recombination and DNA repair. The polypeptide is Probable DNA ligase (Dictyoglomus turgidum (strain DSM 6724 / Z-1310)).